Reading from the N-terminus, the 204-residue chain is bMERB domain-containing protein 1 (204 aa).

One can recognise a bMERB domain in the interval Leu3–Asp150. Positions Val162–Thr187 are disordered.

The protein is bMERB domain-containing protein 1 (BMERB1) of Pongo abelii (Sumatran orangutan).